The chain runs to 369 residues: Biglycan (369 aa).

Residues 1–16 (MRPLWLLTLLLALSQA) form the signal peptide. The propeptide occupies 17–37 (LPFEQKGFWDFTLDDGLLMMN). O-linked (Xyl...) (glycosaminoglycan) serine glycosylation is found at Ser-42 and Ser-48. Disulfide bonds link Cys-64–Cys-70 and Cys-68–Cys-77. LRR repeat units lie at residues 83-103 (KTVP…NNDI), 104-127 (SELR…NNKI), 128-151 (SKIH…KNHL), 152-172 (VEIP…DNRI), 173-196 (RKVP…GNPL), 197-221 (ENSG…EAKL), 222-242 (TGIP…HNKI), 243-266 (QAIE…HNQI), 267-290 (RMIE…NNKL), 291-313 (SRVP…SNNI), 314-343 (TKVG…NNPV), and 344-369 (PYWE…NYKK). Asn-271 and Asn-312 each carry an N-linked (GlcNAc...) asparagine glycan. Cysteines 322 and 355 form a disulfide.

The protein belongs to the small leucine-rich proteoglycan (SLRP) family. SLRP class I subfamily. In terms of assembly, homodimer. Forms a ternary complex with MFAP2 and ELN. The two attached glycosaminoglycan chains can be either chondroitin sulfate or dermatan sulfate. Found in several connective tissues, especially in articular cartilages.

The protein localises to the secreted. It localises to the extracellular space. The protein resides in the extracellular matrix. Functionally, may be involved in collagen fiber assembly. This is Biglycan (Bgn) from Rattus norvegicus (Rat).